The chain runs to 132 residues: Large-conductance mechanosensitive channel (132 aa).

2 helical membrane-spanning segments follow: residues 10-30 (FAVK…SAFG) and 76-96 (GNFI…FLAI).

It belongs to the MscL family. In terms of assembly, homopentamer.

It is found in the cell inner membrane. Channel that opens in response to stretch forces in the membrane lipid bilayer. May participate in the regulation of osmotic pressure changes within the cell. In Campylobacter hominis (strain ATCC BAA-381 / DSM 21671 / CCUG 45161 / LMG 19568 / NCTC 13146 / CH001A), this protein is Large-conductance mechanosensitive channel.